The following is a 427-amino-acid chain: Serine hydroxymethyltransferase (427 aa).

(6S)-5,6,7,8-tetrahydrofolate contacts are provided by residues leucine 118 and 122–124 (GHL). The residue at position 227 (lysine 227) is an N6-(pyridoxal phosphate)lysine. (6S)-5,6,7,8-tetrahydrofolate-binding positions include glutamate 243 and 351 to 353 (SPF).

This sequence belongs to the SHMT family. As to quaternary structure, homodimer. Pyridoxal 5'-phosphate serves as cofactor.

Its subcellular location is the cytoplasm. The catalysed reaction is (6R)-5,10-methylene-5,6,7,8-tetrahydrofolate + glycine + H2O = (6S)-5,6,7,8-tetrahydrofolate + L-serine. The protein operates within one-carbon metabolism; tetrahydrofolate interconversion. It participates in amino-acid biosynthesis; glycine biosynthesis; glycine from L-serine: step 1/1. In terms of biological role, catalyzes the reversible interconversion of serine and glycine with tetrahydrofolate (THF) serving as the one-carbon carrier. This reaction serves as the major source of one-carbon groups required for the biosynthesis of purines, thymidylate, methionine, and other important biomolecules. Also exhibits THF-independent aldolase activity toward beta-hydroxyamino acids, producing glycine and aldehydes, via a retro-aldol mechanism. The polypeptide is Serine hydroxymethyltransferase (Thermotoga neapolitana (strain ATCC 49049 / DSM 4359 / NBRC 107923 / NS-E)).